The following is a 722-amino-acid chain: ORC ubiquitin ligase 1 (722 aa).

Residues 18-56 form an RING-type; degenerate zinc finger; sequence CHICLGKVRQPVVCTNNHVFCSICIDLWLKNNSQCPACR. Coiled-coil stretches lie at residues 87–129 and 157–267; these read LRKT…TILD and VVEW…KEDV. S210 carries the phosphoserine modification. Residues 273–359 are disordered; the sequence is RAPSADSKGP…RLGARETPMD (87 aa). The span at 302-319 shows a compositional bias: low complexity; the sequence is AGSASASHLASPSSSRLA. The segment covering 323-338 has biased composition (polar residues); that stretch reads SVRQESTSRTEPNCPQ. Residues 339–359 show a composition bias toward basic and acidic residues; that stretch reads NKDRYPKPTEPRLGARETPMD. S522, S549, S557, S564, and S566 each carry phosphoserine. Positions 541 to 555 are enriched in polar residues; sequence MSESDNSKSPCNNGF. Disordered stretches follow at residues 541–585 and 691–722; these read MSES…GSKL and VPEKRSKNGNQSTKRKIQSSLANASPSKATKS. Basic and acidic residues predominate over residues 571-581; the sequence is EFLEEPDKLQE. Residues 698–722 show a composition bias toward polar residues; it reads NGNQSTKRKIQSSLANASPSKATKS. Phosphoserine occurs at positions 715 and 717.

In terms of assembly, associates with ORC complex. Binds to chromatin; association is cell cycle-regulated, absent from mitotic chromosomes, is associated with chromatin from G1 and partially released from chromatin from mid S-phase. Post-translationally, auto-ubiquitinated.

The protein resides in the chromosome. The enzyme catalyses S-ubiquitinyl-[E2 ubiquitin-conjugating enzyme]-L-cysteine + [acceptor protein]-L-lysine = [E2 ubiquitin-conjugating enzyme]-L-cysteine + N(6)-ubiquitinyl-[acceptor protein]-L-lysine.. Its function is as follows. E3 ubiquitin ligase essential for DNA replication origin activation during S phase. Acts as a replication origin selector which selects the origins to be fired and catalyzes the multi-mono-ubiquitination of a subset of chromatin-bound ORC3 and ORC5 during S-phase. The chain is ORC ubiquitin ligase 1 from Mus musculus (Mouse).